The primary structure comprises 253 residues: Phosphoglycerate mutase 2 (253 aa).

Position 3 is a phosphothreonine (Thr3). Residues 10 to 17, 23 to 24, Arg62, 89 to 92, Lys100, and 116 to 117 each bind substrate; these read RHGESSWN, CG, ERHY, and RR. His11 serves as the catalytic Tele-phosphohistidine intermediate. Ser14 and Ser15 each carry phosphoserine. Glu89 (proton donor/acceptor) is an active-site residue. Ser118 carries the phosphoserine modification. Thr121 carries the post-translational modification Phosphothreonine. Phosphotyrosine occurs at positions 132 and 133. Ser135 is subject to Phosphoserine. A Phosphothreonine modification is found at Thr152. 187–188 is a substrate binding site; the sequence is GN.

Belongs to the phosphoglycerate mutase family. BPG-dependent PGAM subfamily. In terms of assembly, homodimer. Interacts with ENO1.

The catalysed reaction is (2R)-2-phosphoglycerate = (2R)-3-phosphoglycerate. The enzyme catalyses (2R)-3-phospho-glyceroyl phosphate = (2R)-2,3-bisphosphoglycerate + H(+). Interconversion of 3- and 2-phosphoglycerate with 2,3-bisphosphoglycerate as the primer of the reaction. Can also catalyze the reaction of EC 5.4.2.4 (synthase), but with a reduced activity. This Rattus norvegicus (Rat) protein is Phosphoglycerate mutase 2 (Pgam2).